The following is a 649-amino-acid chain: Solute carrier family 22 member 17 (649 aa).

A disordered region spans residues 1–70; that stretch reads MAPRVATGTP…GGDGLGSSLS (70 aa). A compositionally biased stretch (polar residues) spans 24-34; the sequence is VEITPTSNGQV. Basic and acidic residues predominate over residues 47 to 57; the sequence is QGEREREREGE. 2 N-linked (GlcNAc...) asparagine glycosylation sites follow: Asn-134 and Asn-143. The next 11 helical transmembrane spans lie at 211–231, 240–260, 265–285, 300–320, 330–350, 414–433, 448–468, 477–497, 526–546, 557–577, and 584–604; these read VILE…FLGY, GIVL…AAAG, VMAL…GVYL, ALAG…LALV, MITA…FLES, NIWK…HAIR, FYLC…FLGV, GILL…LGLW, FSVL…LLAA, GLGL…AQRL, and FLQH…IMLL.

This sequence belongs to the major facilitator (TC 2.A.1) superfamily. Organic cation transporter (TC 2.A.1.19) family. Expressed in brain.

The protein resides in the cell membrane. Its subcellular location is the vacuole membrane. Cell surface receptor for LCN2 (24p3) that plays a key role in iron homeostasis and transport. Able to bind iron-bound LCN2 (holo-24p3), followed by internalization of holo-24p3 and release of iron, thereby increasing intracellular iron concentration and leading to inhibition of apoptosis. Also binds iron-free LCN2 (apo-24p3), followed by internalization of apo-24p3 and its association with an intracellular siderophore, leading to iron chelation and iron transfer to the extracellular medium, thereby reducing intracellular iron concentration and resulting in apoptosis. This chain is Solute carrier family 22 member 17 (SLC22A17), found in Homo sapiens (Human).